Reading from the N-terminus, the 287-residue chain is Putative sugar uptake protein LJ_0170 (287 aa).

Helical transmembrane passes span 4-23 (VYLFLPAIGWGLMPLVIASV), 28-50 (VYNQIVGTVAASFIFGAIVMAIM), 56-78 (WSLFLLSALGGACWVIGQVGQYI), 91-108 (ISTGLQLIGVPLVGVLAF), 118-137 (LYGFIGILVLIIGVVLTSFT), 150-169 (VSTIILLVLTSLGYITSSSI), 179-198 (SIFFGQTFGMLVAVFIYTLV), 211-230 (VQSGGAGILYAIAALAYILS), 240-259 (FVISQLCVVISTLGGLIFLH), and 266-285 (GLIFTIAGLILIIGGAMLTT).

It belongs to the GRP transporter (TC 2.A.7.5) family.

Its subcellular location is the cell membrane. The sequence is that of Putative sugar uptake protein LJ_0170 from Lactobacillus johnsonii (strain CNCM I-12250 / La1 / NCC 533).